A 450-amino-acid chain; its full sequence is Na(+)/H(+) antiporter NhaA 2 (450 aa).

A run of 12 helical transmembrane segments spans residues 43 to 63 (VGGAVLLVASAVALVWANSPW), 86 to 106 (LTLGTWAADGLLAVFFLVVGL), 124 to 144 (ALPMAAAVGGMVVPALIFVAV), 155 to 175 (GWAIPTATDIAFAVAVLAVIS), 185 to 205 (FLLTLAVVDDLLAVTVIAVFY), 208 to 228 (EINLTALGLSIVPLALFALCV), 234 to 254 (SWWLLLPLGVATWVLMHESGV), 258 to 278 (VAGVLLGFTVPVLRSVAAGGP), 299 to 319 (VAVPVFAFFAAGVAIGGVSGL), 326 to 346 (PITLGIILGLVVGKPVGIFLT), 364 to 384 (WIDVFGVALLAGIGFTVSLLI), and 398 to 418 (FVKVGVLTGSLVAALIAAVLL).

Belongs to the NhaA Na(+)/H(+) (TC 2.A.33) antiporter family.

It is found in the cell membrane. It catalyses the reaction Na(+)(in) + 2 H(+)(out) = Na(+)(out) + 2 H(+)(in). Na(+)/H(+) antiporter that extrudes sodium in exchange for external protons. In Mycobacterium sp. (strain KMS), this protein is Na(+)/H(+) antiporter NhaA 2.